Consider the following 397-residue polypeptide: Proteinase-activated receptor 2 (397 aa).

The N-terminal stretch at 1–25 (MRSLSLAWLLGGITLLAASASCNRT) is a signal peptide. N-linked (GlcNAc...) asparagine glycosylation is present at Asn-23. A propeptide spans 26–36 (VNAPGPNSKGR) (removed for receptor activation). Topologically, residues 37-71 (SLIGRLDTPPPITGKGAPVEPGFSVDEFSASVLTG) are extracellular. The chain crosses the membrane as a helical span at residues 72 to 101 (KLTTVFLPVIYIIVFVIGLPSNGMALWVFF). At 102 to 108 (FRTKKKH) the chain is on the cytoplasmic side. Residues 109–137 (PAVIYMANLALADLLSVIWFPLKISYHLH) form a helical membrane-spanning segment. At 138–149 (GNDWTYGDALCK) the chain is on the extracellular side. An intrachain disulfide couples Cys-148 to Cys-226. A helical transmembrane segment spans residues 150 to 177 (VLIGFFYGNMYCSILFMTCLSVQRYWVI). At 178–183 (VNPMGH) the chain is on the cytoplasmic side. Residues 184–211 (SRKRANIAVGVSLAIWLLIFLVTIPLYV) form a helical membrane-spanning segment. Residues 212–235 (MRQTIYIPALNITTCHDVLPEEVL) lie on the Extracellular side of the membrane. Asn-222 is a glycosylation site (N-linked (GlcNAc...) asparagine). Residues 236–269 (VGDMFSYFLSLAIGVFLFPALLTASAYVLMIKTL) traverse the membrane as a helical segment. At 270 to 277 (RSSAMDEH) the chain is on the cytoplasmic side. A helical transmembrane segment spans residues 278–317 (SEKKRRRAIRLIITVLSMYFICFAPSNVLLVVHYFLIKSQ). Topologically, residues 318–323 (RQSHVY) are extracellular. The helical transmembrane segment at 324 to 347 (ALYLVALCLSTLNSCIDPFVYYFV) threads the bilayer. The Cytoplasmic portion of the chain corresponds to 348–397 (SKDFRDQARNALLCRSVRTVKRMQISLTSNKFSRKSSSYSSSSTSVKTSY). A lipid anchor (S-palmitoyl cysteine) is attached at Cys-361.

Belongs to the G-protein coupled receptor 1 family. In terms of assembly, interacts with TLR4, COPS5 and TMED2. Interacts with GNAQ, GNA11, GNA12, GNA13 and GNA14. A proteolytic cleavage generates a new N-terminus that functions as a tethered ligand. Activating serine proteases include trypsin, mast cell tryptase, coagulation factors VII and Xa, myeloblastin/PRTN3 and membrane-type serine protease 1/ST14. Proposed subsequent cleavage by serine proteases is leading to receptor deactivation and include neutrophil elastase and cathepsin G. At least in part, implicated proteases are also shown to activate the receptor; the glycosylation status of the receptor is thought to contribute to the difference. In terms of processing, N-glycosylated and sialylated. Post-translationally, multiple phosphorylated on serine and threonine residues in the cytoplasmic region upon receptor activation; required for receptor desensitization and recruitment of beta-arrestin. Monoubiquitinated by Cbl at the plasma membrane and in early endosomes; not required for receptor endocytosis but for translocation to late endosomes or lysosomes. Deubiquitination involves Stambp and Usp8; required for lysosomal trafficking and receptor degradation.

It is found in the cell membrane. In terms of biological role, receptor for trypsin and trypsin-like enzymes coupled to G proteins. Its function is mediated through the activation of several signaling pathways including phospholipase C (PLC), intracellular calcium, mitogen-activated protein kinase (MAPK), I-kappaB kinase/NF-kappaB and Rho. Can also be transactivated by cleaved F2R/PAR1. Involved in modulation of inflammatory responses and regulation of innate and adaptive immunity, and acts as a sensor for proteolytic enzymes generated during infection. Generally is promoting inflammation. Can signal synergistically with TLR4 and probably TLR2 in inflammatory responses and modulates Tlr3 signaling. Has a protective role in establishing the endothelial barrier; the activity involves coagulation factor X. Regulates endothelial cell barrier integrity during neutrophil extravasation, probably following proteolytic cleavage by PRTN3. Proposed to have a bronchoprotective role in airway epithelium, but also shown to compromise the airway epithelial barrier by interrupting E-cadherin adhesion. Involved in the regulation of vascular tone; activation results in hypotension presumably mediated by vasodilation. Associates with a subset of G proteins alpha subunits such as GNAQ, GNA11, GNA14, GNA12 and GNA13, but probably not with G(o)-alpha, G(i) subunit alpha-1 and G(i) subunit alpha-2. Believed to be a class B receptor which internalizes as a complex with arrestin and traffic with it to endosomal vesicles, presumably as desensitized receptor, for extended periods of time. Mediates inhibition of TNF-alpha stimulated JNK phosphorylation via coupling to G GNAQ and GNA11; the function involves dissociation of RIPK1 and Tradd from TNFR1. Mediates phosphorylation of nuclear factor NF-kappa-B RELA subunit at 'Ser-536'; the function involves Ikbkb and is predominantly independent of G proteins. Involved in cellular migration. Involved in cytoskeletal rearrangement and chemotaxis through beta-arrestin-promoted scaffolds; the function is independent of GNAQ and GNA11 and involves promotion of cofilin dephosphorylation and actin filament severing. Induces redistribution of COPS5 from the plasma membrane to the cytosol and activation of the JNK cascade is mediated by Cops5. Involved in the recruitment of leukocytes to the sites of inflammation and is the major PAR receptor capable of modulating eosinophil function such as pro-inflammatory cytokine secretion, superoxide production and degranulation. During inflammation promotes dendritic cell maturation, trafficking to the lymph nodes and subsequent T-cell activation. Involved in antimicrobial response of innate immune cells; activation enhances phagocytosis of Gram-positive and killing of Gram-negative bacteria. Acts synergistically with interferon-gamma in enhancing antiviral responses. Probably mediates activation of pro-inflammatory and pro-fibrotic responses in fibroblasts, triggered by coagulation factor Xa (F10). Probably mediates activation of barrier protective signaling responses in endothelial cells, triggered by coagulation factor Xa (F10). The protein is Proteinase-activated receptor 2 (F2rl1) of Rattus norvegicus (Rat).